A 230-amino-acid polypeptide reads, in one-letter code: Orotidine 5'-phosphate decarboxylase (230 aa).

Residues aspartate 10, lysine 31, 58 to 67, threonine 117, arginine 179, glutamine 188, glycine 208, and arginine 209 contribute to the substrate site; that span reads DLKLHDIPNT. The active-site Proton donor is lysine 60.

It belongs to the OMP decarboxylase family. Type 1 subfamily. As to quaternary structure, homodimer.

It catalyses the reaction orotidine 5'-phosphate + H(+) = UMP + CO2. It participates in pyrimidine metabolism; UMP biosynthesis via de novo pathway; UMP from orotate: step 2/2. Its function is as follows. Catalyzes the decarboxylation of orotidine 5'-monophosphate (OMP) to uridine 5'-monophosphate (UMP). This Staphylococcus aureus (strain bovine RF122 / ET3-1) protein is Orotidine 5'-phosphate decarboxylase.